The sequence spans 290 residues: N-acetylmannosamine kinase (290 aa).

ATP is bound by residues 6–13 and 132–139; these read ALDIGGTK and GVGGGIIL. 4 residues coordinate Zn(2+): His-156, Cys-166, Cys-168, and Cys-173.

It belongs to the ROK (NagC/XylR) family. NanK subfamily. In terms of assembly, homodimer.

The enzyme catalyses an N-acyl-D-mannosamine + ATP = an N-acyl-D-mannosamine 6-phosphate + ADP + H(+). The protein operates within amino-sugar metabolism; N-acetylneuraminate degradation; D-fructose 6-phosphate from N-acetylneuraminate: step 2/5. Functionally, catalyzes the phosphorylation of N-acetylmannosamine (ManNAc) to ManNAc-6-P. This is N-acetylmannosamine kinase from Yersinia pseudotuberculosis serotype O:1b (strain IP 31758).